Consider the following 275-residue polypeptide: Large ribosomal subunit protein uL2 (275 aa).

Positions 224–275 (AMNPVDHPHGGGEAKAGQGNPHPVTPWGVPTKGYKTRKNKRTQQFIVRDRRG) are disordered.

It belongs to the universal ribosomal protein uL2 family. As to quaternary structure, part of the 50S ribosomal subunit. Forms a bridge to the 30S subunit in the 70S ribosome.

Functionally, one of the primary rRNA binding proteins. Required for association of the 30S and 50S subunits to form the 70S ribosome, for tRNA binding and peptide bond formation. It has been suggested to have peptidyltransferase activity; this is somewhat controversial. Makes several contacts with the 16S rRNA in the 70S ribosome. This Xanthomonas axonopodis pv. citri (strain 306) protein is Large ribosomal subunit protein uL2.